A 489-amino-acid polypeptide reads, in one-letter code: Betaine aldehyde dehydrogenase (489 aa).

K(+) is bound by residues threonine 26 and aspartate 93. 150 to 152 (GAW) contacts NAD(+). The Charge relay system role is filled by lysine 162. 176-179 (KPSE) lines the NAD(+) pocket. Valine 180 serves as a coordination point for K(+). Residue 229-232 (GVET) coordinates NAD(+). Leucine 245 serves as a coordination point for K(+). The Proton acceptor role is filled by glutamate 251. The NAD(+) site is built by glycine 253, cysteine 285, and glutamate 386. The Nucleophile role is filled by cysteine 285. Cysteine 285 carries the post-translational modification Cysteine sulfenic acid (-SOH). Lysine 456 and glycine 459 together coordinate K(+). Residue glutamate 463 is the Charge relay system of the active site.

The protein belongs to the aldehyde dehydrogenase family. As to quaternary structure, dimer of dimers. K(+) is required as a cofactor.

The enzyme catalyses betaine aldehyde + NAD(+) + H2O = glycine betaine + NADH + 2 H(+). The protein operates within amine and polyamine biosynthesis; betaine biosynthesis via choline pathway; betaine from betaine aldehyde: step 1/1. Its function is as follows. Involved in the biosynthesis of the osmoprotectant glycine betaine. Catalyzes the irreversible oxidation of betaine aldehyde to the corresponding acid. The sequence is that of Betaine aldehyde dehydrogenase from Burkholderia pseudomallei (strain 668).